The following is a 326-amino-acid chain: Neuferricin homolog (326 aa).

A signal peptide spans 1 to 34 (MEKNRRKKDDAGVMTKTLAGVAALTFLVSFICSS). The 100-residue stretch at 98-197 (KHVFTPEQLH…KEYPLVGVVA (100 aa)) folds into the Cytochrome b5 heme-binding domain.

The protein belongs to the cytochrome b5 family. MAPR subfamily.

Its subcellular location is the secreted. Functionally, heme-binding protein. The polypeptide is Neuferricin homolog (Caenorhabditis briggsae).